Here is a 74-residue protein sequence, read N- to C-terminus: Large ribosomal subunit protein bL31 (74 aa).

The protein belongs to the bacterial ribosomal protein bL31 family. Type A subfamily. As to quaternary structure, part of the 50S ribosomal subunit.

Functionally, binds the 23S rRNA. The sequence is that of Large ribosomal subunit protein bL31 from Afipia carboxidovorans (strain ATCC 49405 / DSM 1227 / KCTC 32145 / OM5) (Oligotropha carboxidovorans).